Here is an 824-residue protein sequence, read N- to C-terminus: Neuronal PAS domain-containing protein 2 (824 aa).

The span at 1-10 (MDEDEKDRAK) shows a compositional bias: basic and acidic residues. The segment at 1–21 (MDEDEKDRAKRASRNKSEKKR) is disordered. Positions 1–61 (MDEDEKDRAK…VIGFLQKHNE (61 aa)) are sufficient for heterodimer formation with BMAL1, E-box binding and for the effect of NADPH. The bHLH domain occupies 9–59 (AKRASRNKSEKKRRDQFNVLIKELSSMLPGNTRKMDKTTVLEKVIGFLQKH). The PAS 1 domain maps to 82-152 (NEEFTQLMLE…KILSSHMLVT (71 aa)). Residues H119 and H171 each coordinate heme b. Residues 237–307 (FLKEMCIVDE…RCHQHLMQFG (71 aa)) enclose the PAS 2 domain. The PAC domain maps to 311 to 354 (SCCYRFLTKGQQWIWLQTHYYITYHQWNSKPEFIVCTHSVVSYA). Disordered stretches follow at residues 367 to 437 (EDPP…MAEA), 556 to 667 (SSTQ…PDFS), 681 to 704 (QPMMPGSCDARQPSEVSRTGRQVK), and 739 to 824 (PSFP…QPPR). Positions 378–390 (ALKDKGSSLEPRQ) are enriched in basic and acidic residues. The segment covering 421–431 (TAMSEPTSTPT) has biased composition (polar residues). The span at 559–576 (QRPEAQQQLQQRSAAVTQ) shows a compositional bias: low complexity. A compositionally biased stretch (polar residues) spans 587–610 (GQISSAQVTSQHLLRESSVISTQG). The segment covering 614–636 (MRSSQLMQSSGRSGSSLVSPFSS) has biased composition (low complexity). Composition is skewed to polar residues over residues 645-664 (LNLTTPASTSQDASQCQPSP) and 694-704 (SEVSRTGRQVK). The span at 739 to 760 (PSFPASQPSPLQPAQARQQPPQ) shows a compositional bias: low complexity. The span at 766-789 (QAPTSLHSEQQDSLLLSTYSQQPG) shows a compositional bias: polar residues. A compositionally biased stretch (pro residues) spans 794 to 805 (PQPPPAQPQPLR). The span at 809–824 (RVSSLSESSGLQQPPR) shows a compositional bias: low complexity.

As to quaternary structure, component of the circadian clock oscillator which includes the CRY proteins, CLOCK or NPAS2, BMAL1 or BMAL2, CSNK1D and/or CSNK1E, TIMELESS and the PER proteins. Efficient DNA binding requires dimerization with another bHLH protein. Forms a heterodimer with BMAL1 and this heterodimerization is required for E-box-dependent transactivation. Interacts with NCOA3, KAT2B, CREBBP and EP300. The cofactor is heme.

It is found in the nucleus. Its activity is regulated as follows. Carbon monoxide (CO) and the redox state of the cell can modulate the transcriptional activity of the NPAS2-BMAL1 heterodimer. NADH and NADPH enhance the DNA-binding activity of the heterodimer whereas CO binds the heme group in NPAS2 and inhibits the DNA-binding activity of the heterodimer. Functionally, transcriptional activator which forms a core component of the circadian clock. The circadian clock, an internal time-keeping system, regulates various physiological processes through the generation of approximately 24 hour circadian rhythms in gene expression, which are translated into rhythms in metabolism and behavior. It is derived from the Latin roots 'circa' (about) and 'diem' (day) and acts as an important regulator of a wide array of physiological functions including metabolism, sleep, body temperature, blood pressure, endocrine, immune, cardiovascular, and renal function. Consists of two major components: the central clock, residing in the suprachiasmatic nucleus (SCN) of the brain, and the peripheral clocks that are present in nearly every tissue and organ system. Both the central and peripheral clocks can be reset by environmental cues, also known as Zeitgebers (German for 'timegivers'). The predominant Zeitgeber for the central clock is light, which is sensed by retina and signals directly to the SCN. The central clock entrains the peripheral clocks through neuronal and hormonal signals, body temperature and feeding-related cues, aligning all clocks with the external light/dark cycle. Circadian rhythms allow an organism to achieve temporal homeostasis with its environment at the molecular level by regulating gene expression to create a peak of protein expression once every 24 hours to control when a particular physiological process is most active with respect to the solar day. Transcription and translation of core clock components (CLOCK, NPAS2, BMAL1, BMAL2, PER1, PER2, PER3, CRY1 and CRY2) plays a critical role in rhythm generation, whereas delays imposed by post-translational modifications (PTMs) are important for determining the period (tau) of the rhythms (tau refers to the period of a rhythm and is the length, in time, of one complete cycle). A diurnal rhythm is synchronized with the day/night cycle, while the ultradian and infradian rhythms have a period shorter and longer than 24 hours, respectively. Disruptions in the circadian rhythms contribute to the pathology of cardiovascular diseases, cancer, metabolic syndromes and aging. A transcription/translation feedback loop (TTFL) forms the core of the molecular circadian clock mechanism. Transcription factors, CLOCK or NPAS2 and BMAL1 or BMAL2, form the positive limb of the feedback loop, act in the form of a heterodimer and activate the transcription of core clock genes and clock-controlled genes (involved in key metabolic processes), harboring E-box elements (5'-CACGTG-3') within their promoters. The core clock genes: PER1/2/3 and CRY1/2 which are transcriptional repressors form the negative limb of the feedback loop and interact with the CLOCK|NPAS2-BMAL1|BMAL2 heterodimer inhibiting its activity and thereby negatively regulating their own expression. This heterodimer also activates nuclear receptors NR1D1/2 and RORA/B/G, which form a second feedback loop and which activate and repress BMAL1 transcription, respectively. The NPAS2-BMAL1 heterodimer positively regulates the expression of MAOA, F7 and LDHA and modulates the circadian rhythm of daytime contrast sensitivity by regulating the rhythmic expression of adenylate cyclase type 1 (ADCY1) in the retina. NPAS2 plays an important role in sleep homeostasis and in maintaining circadian behaviors in normal light/dark and feeding conditions and in the effective synchronization of feeding behavior with scheduled food availability. Regulates the gene transcription of key metabolic pathways in the liver and is involved in DNA damage response by regulating several cell cycle and DNA repair genes. Controls the circadian rhythm of NR0B2 expression by binding rhythmically to its promoter. Mediates the diurnal variation in the expression of GABARA1 receptor in the brain and contributes to the regulation of anxiety-like behaviors and GABAergic neurotransmission in the ventral striatum. This Homo sapiens (Human) protein is Neuronal PAS domain-containing protein 2 (NPAS2).